A 589-amino-acid polypeptide reads, in one-letter code: Aspartate--tRNA ligase (589 aa).

An L-aspartate-binding site is contributed by Glu171. The segment at 195–198 is aspartate; sequence QLFK. Arg217 is a binding site for L-aspartate. Residues 217-219 and Gln226 contribute to the ATP site; that span reads RDE. An L-aspartate-binding site is contributed by His448. An ATP-binding site is contributed by Glu482. Residue Arg489 participates in L-aspartate binding. Residue 534–537 participates in ATP binding; that stretch reads GLDR.

This sequence belongs to the class-II aminoacyl-tRNA synthetase family. Type 1 subfamily. Homodimer.

The protein resides in the cytoplasm. It carries out the reaction tRNA(Asp) + L-aspartate + ATP = L-aspartyl-tRNA(Asp) + AMP + diphosphate. Its function is as follows. Catalyzes the attachment of L-aspartate to tRNA(Asp) in a two-step reaction: L-aspartate is first activated by ATP to form Asp-AMP and then transferred to the acceptor end of tRNA(Asp). The sequence is that of Aspartate--tRNA ligase from Idiomarina loihiensis (strain ATCC BAA-735 / DSM 15497 / L2-TR).